We begin with the raw amino-acid sequence, 412 residues long: Argininosuccinate synthase (412 aa).

ATP contacts are provided by residues 16 to 24 and alanine 44; that span reads AYSGGLDTS. Positions 96 and 101 each coordinate L-citrulline. Residue glycine 126 participates in ATP binding. L-aspartate-binding residues include threonine 128, asparagine 132, and aspartate 133. Asparagine 132 contributes to the L-citrulline binding site. L-citrulline-binding residues include arginine 136, serine 185, serine 194, glutamate 270, and tyrosine 282.

This sequence belongs to the argininosuccinate synthase family. Type 1 subfamily. As to quaternary structure, homotetramer.

It localises to the cytoplasm. The enzyme catalyses L-citrulline + L-aspartate + ATP = 2-(N(omega)-L-arginino)succinate + AMP + diphosphate + H(+). It participates in amino-acid biosynthesis; L-arginine biosynthesis; L-arginine from L-ornithine and carbamoyl phosphate: step 2/3. In Shewanella baltica (strain OS195), this protein is Argininosuccinate synthase.